The chain runs to 211 residues: Large ribosomal subunit protein uL4 (211 aa).

A disordered region spans residues 44-94; it reads RSGNHATKTRSEVRGGGKKPWSQKGTGHARQGSTRAPHWVGGGTVHGPQKR.

Belongs to the universal ribosomal protein uL4 family. As to quaternary structure, part of the 50S ribosomal subunit.

Functionally, one of the primary rRNA binding proteins, this protein initially binds near the 5'-end of the 23S rRNA. It is important during the early stages of 50S assembly. It makes multiple contacts with different domains of the 23S rRNA in the assembled 50S subunit and ribosome. In terms of biological role, forms part of the polypeptide exit tunnel. This chain is Large ribosomal subunit protein uL4, found in Leptospira borgpetersenii serovar Hardjo-bovis (strain JB197).